Reading from the N-terminus, the 455-residue chain is uncharacterized protein (455 aa).

Residues Asn-42, Asn-49, and Asn-70 are each glycosylated (N-linked (GlcNAc...) asparagine). The next 4 membrane-spanning stretches (helical) occupy residues 127–147 (AILISFGLIIGALLYLYTWIF), 153–173 (SLLDWMFISCSGIIHQFMFRI), 177–197 (ICALVLIGFWLLCCLVIITYY), and 377–397 (YKFCFIFYGIAIIVFILEIIF). A glycan (N-linked (GlcNAc...) asparagine) is linked at Asn-403.

The protein localises to the membrane. This is an uncharacterized protein from Caenorhabditis elegans.